The following is a 221-amino-acid chain: Type 3 secretion system stator protein (221 aa).

Belongs to the SctL stator family. The core secretion machinery of the T3SS is composed of approximately 20 different proteins, including cytoplasmic components, a base, an export apparatus and a needle. This subunit is part of the cytosolic complex. Interacts directly with YscN/SctN (T3SS ATPase) and YscQ/SctQ (the major sorting platform component).

Its subcellular location is the cytoplasm. Functionally, component of the type III secretion system (T3SS), also called injectisome, which is used to inject bacterial effector proteins into eukaryotic host cells. Acts as a regulator of the YscN/SctN ATPase activity. The protein is Type 3 secretion system stator protein of Yersinia pestis.